A 438-amino-acid polypeptide reads, in one-letter code: uncharacterized protein (438 aa).

This is an uncharacterized protein from Acanthamoeba polyphaga mimivirus (APMV).